We begin with the raw amino-acid sequence, 1017 residues long: Type VI secretion system spike protein VgrG3 (1017 aa).

Asp842 is an active-site residue.

Belongs to the VgrG protein family. In terms of assembly, interacts with TsiV3. Interacts with TseL.

It localises to the secreted. Functionally, part of the type VI secretion system specialized secretion system, which delivers several virulence factors in both prokaryotic and eukaryotic cells during infection. Forms the spike at the tip of the elongating tube formed by haemolysin co-regulated protein Hcp. Allows the delivery of the TseL antibacterial toxin to target cells where it exerts its toxicity. Additionally, acts directly as an effector and targets the cell wall peptidoglycan layer of prey cells for degradation via its C-terminus. Toxicity is counteracted by a cognate immunity protein TsiV3. In Vibrio cholerae serotype O1 (strain ATCC 39315 / El Tor Inaba N16961), this protein is Type VI secretion system spike protein VgrG3.